The following is a 400-amino-acid chain: Nicotinate phosphoribosyltransferase (400 aa).

The residue at position 220 (H220) is a Phosphohistidine; by autocatalysis.

This sequence belongs to the NAPRTase family. Post-translationally, transiently phosphorylated on a His residue during the reaction cycle. Phosphorylation strongly increases the affinity for substrates and increases the rate of nicotinate D-ribonucleotide production. Dephosphorylation regenerates the low-affinity form of the enzyme, leading to product release.

It carries out the reaction nicotinate + 5-phospho-alpha-D-ribose 1-diphosphate + ATP + H2O = nicotinate beta-D-ribonucleotide + ADP + phosphate + diphosphate. The protein operates within cofactor biosynthesis; NAD(+) biosynthesis; nicotinate D-ribonucleotide from nicotinate: step 1/1. Functionally, catalyzes the synthesis of beta-nicotinate D-ribonucleotide from nicotinate and 5-phospho-D-ribose 1-phosphate at the expense of ATP. The sequence is that of Nicotinate phosphoribosyltransferase from Salmonella choleraesuis (strain SC-B67).